Reading from the N-terminus, the 477-residue chain is Argininosuccinate lyase (477 aa).

It belongs to the lyase 1 family. Argininosuccinate lyase subfamily.

It is found in the cytoplasm. The catalysed reaction is 2-(N(omega)-L-arginino)succinate = fumarate + L-arginine. It functions in the pathway amino-acid biosynthesis; L-arginine biosynthesis; L-arginine from L-ornithine and carbamoyl phosphate: step 3/3. The sequence is that of Argininosuccinate lyase from Streptomyces avermitilis (strain ATCC 31267 / DSM 46492 / JCM 5070 / NBRC 14893 / NCIMB 12804 / NRRL 8165 / MA-4680).